Consider the following 111-residue polypeptide: Large ribosomal subunit protein uL22 (111 aa).

Belongs to the universal ribosomal protein uL22 family. As to quaternary structure, part of the 50S ribosomal subunit.

This protein binds specifically to 23S rRNA; its binding is stimulated by other ribosomal proteins, e.g. L4, L17, and L20. It is important during the early stages of 50S assembly. It makes multiple contacts with different domains of the 23S rRNA in the assembled 50S subunit and ribosome. In terms of biological role, the globular domain of the protein is located near the polypeptide exit tunnel on the outside of the subunit, while an extended beta-hairpin is found that lines the wall of the exit tunnel in the center of the 70S ribosome. This is Large ribosomal subunit protein uL22 from Clostridium acetobutylicum (strain ATCC 824 / DSM 792 / JCM 1419 / IAM 19013 / LMG 5710 / NBRC 13948 / NRRL B-527 / VKM B-1787 / 2291 / W).